A 66-amino-acid chain; its full sequence is Large ribosomal subunit protein uL29 (66 aa).

Belongs to the universal ribosomal protein uL29 family.

The chain is Large ribosomal subunit protein uL29 from Thermococcus sibiricus (strain DSM 12597 / MM 739).